We begin with the raw amino-acid sequence, 118 residues long: uncharacterized protein (118 aa).

This is an uncharacterized protein from Saccharomyces cerevisiae (strain ATCC 204508 / S288c) (Baker's yeast).